The sequence spans 510 residues: Glutamyl-tRNA(Gln) amidotransferase subunit A (510 aa).

Active-site charge relay system residues include Lys-82 and Ser-157. Ser-181 (acyl-ester intermediate) is an active-site residue.

Belongs to the amidase family. GatA subfamily. As to quaternary structure, heterotrimer of A, B and C subunits.

The catalysed reaction is L-glutamyl-tRNA(Gln) + L-glutamine + ATP + H2O = L-glutaminyl-tRNA(Gln) + L-glutamate + ADP + phosphate + H(+). In terms of biological role, allows the formation of correctly charged Gln-tRNA(Gln) through the transamidation of misacylated Glu-tRNA(Gln) in organisms which lack glutaminyl-tRNA synthetase. The reaction takes place in the presence of glutamine and ATP through an activated gamma-phospho-Glu-tRNA(Gln). The protein is Glutamyl-tRNA(Gln) amidotransferase subunit A of Bordetella avium (strain 197N).